Here is a 481-residue protein sequence, read N- to C-terminus: Pyruvate kinase (481 aa).

Arginine 36 is a binding site for substrate. Residues asparagine 38, serine 40, and aspartate 70 each coordinate K(+). Residue 38–41 (NFSH) participates in ATP binding. Residues arginine 77 and lysine 160 each contribute to the ATP site. Glutamate 225 is a Mg(2+) binding site. Substrate is bound by residues glycine 251, aspartate 252, and threonine 284. Aspartate 252 lines the Mg(2+) pocket.

The protein belongs to the pyruvate kinase family. Homotetramer. Requires Mg(2+) as cofactor. The cofactor is K(+).

The enzyme catalyses pyruvate + ATP = phosphoenolpyruvate + ADP + H(+). It functions in the pathway carbohydrate degradation; glycolysis; pyruvate from D-glyceraldehyde 3-phosphate: step 5/5. Its activity is regulated as follows. Allosterically activated by AMP and by several sugar phosphates. Belongs to type II PK. This chain is Pyruvate kinase (pykA), found in Buchnera aphidicola subsp. Schizaphis graminum (strain Sg).